We begin with the raw amino-acid sequence, 233 residues long: Lysoplasmalogenase TMEM86B (233 aa).

The Cytoplasmic portion of the chain corresponds to 1-30 (MPCCDPYPWIGLNVGRLSSFPLLKYPQVRR). The helical transmembrane segment at 31–47 (WLAPFIVACSLYFLLWI) threads the bilayer. Residues 48–53 (PEDQPS) are Extracellular-facing. A helical membrane pass occupies residues 54–75 (WVSALVKCQPILCLVLFLWAVA). Residues 76-81 (PGGSYT) lie on the Cytoplasmic side of the membrane. A helical transmembrane segment spans residues 82-100 (WLLQGALTCSAVGDACLIW). Residues 101–106 (PEAFFY) lie on the Extracellular side of the membrane. Residues 107-124 (GMAVFSVAHLLYLWAFGL) traverse the membrane as a helical segment. Residues 125 to 130 (SPLQPG) lie on the Cytoplasmic side of the membrane. Residues 131–147 (LLLCTTLASLTYYSFLL) form a helical membrane-spanning segment. Over 148–153 (LHLEPN) the chain is Extracellular. A helical membrane pass occupies residues 154 to 170 (MVLPVAAYGLILNTMLW). The Cytoplasmic segment spans residues 171–178 (RGLVLGRS). Residues 179-195 (AGWGAVLFIFSDGVLAW) form a helical membrane-spanning segment. Over 196–206 (DTFVYTLPFAR) the chain is Extracellular. A helical membrane pass occupies residues 207–225 (LVTMSTYYAAQLLLTLSAL). The Cytoplasmic segment spans residues 226-233 (RSPGLKTH).

It belongs to the TMEM86 family. In terms of assembly, homodimer.

It localises to the endoplasmic reticulum membrane. Its subcellular location is the cytoplasm. The catalysed reaction is a 1-O-(1Z-alkenyl)-sn-glycero-3-phosphocholine + H2O = a 2,3-saturated aldehyde + sn-glycerol 3-phosphocholine. It catalyses the reaction a 1-O-(1Z-alkenyl)-sn-glycero-3-phosphoethanolamine + H2O = a 2,3-saturated aldehyde + sn-glycero-3-phosphoethanolamine. Competitively inhibited by lysophosphatidic acid. Functionally, catalyzes the hydrolysis of the vinyl ether bond of choline or ethanolamine lysoplasmalogens, forming fatty aldehyde and glycerophosphocholine or glycerophosphoethanolamine, respectively and is specific for the sn-2-deacylated (lyso) form of plasmalogen. In Rattus norvegicus (Rat), this protein is Lysoplasmalogenase TMEM86B (Tmem86b).